The primary structure comprises 400 residues: Cytochrome P450 BJ-1 homolog (400 aa).

Residue Cys349 coordinates heme.

It belongs to the cytochrome P450 family. The cofactor is heme.

In terms of biological role, cytochromes P450 are a group of heme-thiolate monooxygenases. They oxidize a variety of structurally unrelated compounds, including steroids, fatty acids, and xenobiotics. The sequence is that of Cytochrome P450 BJ-1 homolog (cyp112A2) from Sinorhizobium fredii (strain NBRC 101917 / NGR234).